A 381-amino-acid chain; its full sequence is Nitric oxide reductase FlRd-NAD(+) reductase (381 aa).

It belongs to the FAD-dependent oxidoreductase family. FAD is required as a cofactor.

It is found in the cytoplasm. It catalyses the reaction 2 reduced [nitric oxide reductase rubredoxin domain] + NAD(+) + H(+) = 2 oxidized [nitric oxide reductase rubredoxin domain] + NADH. Its pathway is nitrogen metabolism; nitric oxide reduction. Functionally, one of at least two accessory proteins for anaerobic nitric oxide (NO) reductase. Reduces the rubredoxin moiety of NO reductase. This chain is Nitric oxide reductase FlRd-NAD(+) reductase, found in Aliivibrio fischeri (strain ATCC 700601 / ES114) (Vibrio fischeri).